The sequence spans 141 residues: Galactose-6-phosphate isomerase subunit LacA (141 aa).

The protein belongs to the LacAB/RpiB family. Heteromultimeric protein consisting of LacA and LacB.

The catalysed reaction is aldehydo-D-galactose 6-phosphate = keto-D-tagatose 6-phosphate. Its pathway is carbohydrate metabolism; D-galactose 6-phosphate degradation; D-tagatose 6-phosphate from D-galactose 6-phosphate: step 1/1. The sequence is that of Galactose-6-phosphate isomerase subunit LacA from Streptococcus equi subsp. zooepidemicus (strain MGCS10565).